We begin with the raw amino-acid sequence, 276 residues long: Glutamate racemase (276 aa).

Substrate contacts are provided by residues 10–11 and 42–43; these read DS and YG. Cys-74 acts as the Proton donor/acceptor in catalysis. 75 to 76 lines the substrate pocket; the sequence is NT. Cys-185 (proton donor/acceptor) is an active-site residue. 186-187 provides a ligand contact to substrate; it reads TH.

This sequence belongs to the aspartate/glutamate racemases family.

The enzyme catalyses L-glutamate = D-glutamate. Its pathway is cell wall biogenesis; peptidoglycan biosynthesis. Provides the (R)-glutamate required for cell wall biosynthesis. The sequence is that of Glutamate racemase from Levilactobacillus brevis (Lactobacillus brevis).